The following is a 185-amino-acid chain: HTH-type transcriptional regulator SA2364 (185 aa).

The HTH tetR-type domain occupies K6–F66. Residues S29–F48 constitute a DNA-binding region (H-T-H motif).

The protein is HTH-type transcriptional regulator SA2364 of Staphylococcus aureus (strain N315).